Here is a 566-residue protein sequence, read N- to C-terminus: Probable cytochrome P450 519D1 (566 aa).

A helical transmembrane segment spans residues 1–21; the sequence is MNVFVLTFFICIIYLLFDLIK. Positions 471-491 are disordered; that stretch reads FNNNNNNNNNNNNNNSNNKHK. The span at 472–487 shows a compositional bias: low complexity; it reads NNNNNNNNNNNNNNSN. Cys-510 is a heme binding site.

This sequence belongs to the cytochrome P450 family. It depends on heme as a cofactor.

Its subcellular location is the membrane. In Dictyostelium discoideum (Social amoeba), this protein is Probable cytochrome P450 519D1 (cyp519D1).